Here is a 272-residue protein sequence, read N- to C-terminus: Formamidopyrimidine-DNA glycosylase (272 aa).

P2 functions as the Schiff-base intermediate with DNA in the catalytic mechanism. E3 serves as the catalytic Proton donor. The active-site Proton donor; for beta-elimination activity is K58. Residues H93, R112, and R153 each contribute to the DNA site. Residues 238 to 272 (HVYGKSGQHCPKCGNILEDLKISNRGTVYCPHCQR) form an FPG-type zinc finger. R262 serves as the catalytic Proton donor; for delta-elimination activity.

Belongs to the FPG family. In terms of assembly, monomer. The cofactor is Zn(2+).

It carries out the reaction Hydrolysis of DNA containing ring-opened 7-methylguanine residues, releasing 2,6-diamino-4-hydroxy-5-(N-methyl)formamidopyrimidine.. It catalyses the reaction 2'-deoxyribonucleotide-(2'-deoxyribose 5'-phosphate)-2'-deoxyribonucleotide-DNA = a 3'-end 2'-deoxyribonucleotide-(2,3-dehydro-2,3-deoxyribose 5'-phosphate)-DNA + a 5'-end 5'-phospho-2'-deoxyribonucleoside-DNA + H(+). In terms of biological role, involved in base excision repair of DNA damaged by oxidation or by mutagenic agents. Acts as a DNA glycosylase that recognizes and removes damaged bases. Has a preference for oxidized purines, such as 7,8-dihydro-8-oxoguanine (8-oxoG). Has AP (apurinic/apyrimidinic) lyase activity and introduces nicks in the DNA strand. Cleaves the DNA backbone by beta-delta elimination to generate a single-strand break at the site of the removed base with both 3'- and 5'-phosphates. This chain is Formamidopyrimidine-DNA glycosylase, found in Dichelobacter nodosus (strain VCS1703A).